We begin with the raw amino-acid sequence, 299 residues long: Proline iminopeptidase (299 aa).

The AB hydrolase-1 domain occupies 29–279 (PLLLLHGGPG…SRHMAFIDEP (251 aa)). Serine 105 acts as the Nucleophile in catalysis. Aspartate 245 is an active-site residue. The active-site Proton donor is the histidine 272.

This sequence belongs to the peptidase S33 family.

It is found in the cell envelope. The enzyme catalyses Release of N-terminal proline from a peptide.. Its function is as follows. Releases the N-terminal proline from various substrates. This chain is Proline iminopeptidase, found in Levilactobacillus brevis (strain ATCC 367 / BCRC 12310 / CIP 105137 / JCM 1170 / LMG 11437 / NCIMB 947 / NCTC 947) (Lactobacillus brevis).